A 177-amino-acid chain; its full sequence is NADH-quinone oxidoreductase subunit B (177 aa).

Residues cysteine 56, cysteine 57, cysteine 121, and cysteine 151 each contribute to the [4Fe-4S] cluster site.

This sequence belongs to the complex I 20 kDa subunit family. In terms of assembly, NDH-1 is composed of 14 different subunits. Subunits NuoB, C, D, E, F, and G constitute the peripheral sector of the complex. [4Fe-4S] cluster is required as a cofactor.

It is found in the cell inner membrane. It catalyses the reaction a quinone + NADH + 5 H(+)(in) = a quinol + NAD(+) + 4 H(+)(out). Functionally, NDH-1 shuttles electrons from NADH, via FMN and iron-sulfur (Fe-S) centers, to quinones in the respiratory chain. Couples the redox reaction to proton translocation (for every two electrons transferred, four hydrogen ions are translocated across the cytoplasmic membrane), and thus conserves the redox energy in a proton gradient. This chain is NADH-quinone oxidoreductase subunit B, found in Sphingopyxis alaskensis (strain DSM 13593 / LMG 18877 / RB2256) (Sphingomonas alaskensis).